Reading from the N-terminus, the 119-residue chain is Large ribosomal subunit protein bL20 (119 aa).

Belongs to the bacterial ribosomal protein bL20 family.

In terms of biological role, binds directly to 23S ribosomal RNA and is necessary for the in vitro assembly process of the 50S ribosomal subunit. It is not involved in the protein synthesizing functions of that subunit. This chain is Large ribosomal subunit protein bL20, found in Alkalilimnicola ehrlichii (strain ATCC BAA-1101 / DSM 17681 / MLHE-1).